Here is a 141-residue protein sequence, read N- to C-terminus: Large ribosomal subunit protein uL11 (141 aa).

The protein belongs to the universal ribosomal protein uL11 family. Part of the ribosomal stalk of the 50S ribosomal subunit. Interacts with L10 and the large rRNA to form the base of the stalk. L10 forms an elongated spine to which L12 dimers bind in a sequential fashion forming a multimeric L10(L12)X complex. In terms of processing, one or more lysine residues are methylated.

Functionally, forms part of the ribosomal stalk which helps the ribosome interact with GTP-bound translation factors. This chain is Large ribosomal subunit protein uL11, found in Acetivibrio thermocellus (strain ATCC 27405 / DSM 1237 / JCM 9322 / NBRC 103400 / NCIMB 10682 / NRRL B-4536 / VPI 7372) (Clostridium thermocellum).